A 277-amino-acid chain; its full sequence is Large ribosomal subunit protein uL2 (277 aa).

2 disordered regions span residues 34-55 (LQPLPKKAGRNNQGKLTVRHHG) and 213-277 (WKGI…RKKK).

It belongs to the universal ribosomal protein uL2 family. Part of the 50S ribosomal subunit. Forms a bridge to the 30S subunit in the 70S ribosome.

One of the primary rRNA binding proteins. Required for association of the 30S and 50S subunits to form the 70S ribosome, for tRNA binding and peptide bond formation. It has been suggested to have peptidyltransferase activity; this is somewhat controversial. Makes several contacts with the 16S rRNA in the 70S ribosome. This Staphylococcus haemolyticus (strain JCSC1435) protein is Large ribosomal subunit protein uL2.